The following is a 346-amino-acid chain: MGKVHRPRRGSLAFSPRKRARSVVPRIKKWPKDSEVRMLGFAGYKAGMTHILMIDDSPGLTKGKEIFVPVTIVEVPPLFVYGIRAYKQGYLGLETATEVWFHELNDNVKRRIKTLPKNYGEEDFKAKLGQLEDLVNDGEIVDVRLLVHTQPWLIKLKKKPEVMEYAIGGDDVKAKFEYAKERIGKEIRASEVLHEGELLDVIAVTKGKGTQGPVKRWGVKVQFHKAQRAGKGRHIGNLGPWHPARVMWTVPQAGQMGFHHRTEFNKRLIAIGENGKLVLNGNEIDITPKGGFPHYGIIRSDFLMIEGSVPGSFKRIIRVRPAIKPPKKKPPVERPQITYVSRESKQ.

The segment at 324–346 (KPPKKKPPVERPQITYVSRESKQ) is disordered.

This sequence belongs to the universal ribosomal protein uL3 family. As to quaternary structure, part of the 50S ribosomal subunit. Forms a cluster with proteins L14 and L24e.

Functionally, one of the primary rRNA binding proteins, it binds directly near the 3'-end of the 23S rRNA, where it nucleates assembly of the 50S subunit. This is Large ribosomal subunit protein uL3 from Thermococcus gammatolerans (strain DSM 15229 / JCM 11827 / EJ3).